We begin with the raw amino-acid sequence, 388 residues long: 4-hydroxy-3-methylbut-2-en-1-yl diphosphate synthase (flavodoxin) (388 aa).

[4Fe-4S] cluster contacts are provided by Cys280, Cys283, Cys315, and Glu322. The segment at 369–388 (MNSEGGPEATSSGSPVVTVS) is disordered. Residues 377–388 (ATSSGSPVVTVS) show a composition bias toward polar residues.

This sequence belongs to the IspG family. Requires [4Fe-4S] cluster as cofactor.

It catalyses the reaction (2E)-4-hydroxy-3-methylbut-2-enyl diphosphate + oxidized [flavodoxin] + H2O + 2 H(+) = 2-C-methyl-D-erythritol 2,4-cyclic diphosphate + reduced [flavodoxin]. Its pathway is isoprenoid biosynthesis; isopentenyl diphosphate biosynthesis via DXP pathway; isopentenyl diphosphate from 1-deoxy-D-xylulose 5-phosphate: step 5/6. Converts 2C-methyl-D-erythritol 2,4-cyclodiphosphate (ME-2,4cPP) into 1-hydroxy-2-methyl-2-(E)-butenyl 4-diphosphate. The protein is 4-hydroxy-3-methylbut-2-en-1-yl diphosphate synthase (flavodoxin) of Mycolicibacterium paratuberculosis (strain ATCC BAA-968 / K-10) (Mycobacterium paratuberculosis).